Consider the following 483-residue polypeptide: Probable glycosyltransferase 6 (483 aa).

Topologically, residues 1-40 (MAASETAPFGVSAASKGGGGVAGARAQHGQLAVAGRVHDA) are cytoplasmic. Residues 41–61 (LVFAAGAVAAVLVLLATASFL) form a helical; Signal-anchor for type II membrane protein membrane-spanning segment. The Lumenal portion of the chain corresponds to 62-483 (SPMPVTNLVA…PLPFDYPAAR (422 aa)). Asn-144 carries an N-linked (GlcNAc...) asparagine glycan.

It belongs to the glycosyltransferase 34 family.

It localises to the golgi apparatus membrane. Its function is as follows. Probable glycosyltransferase that may be involved in the biosynthesis of xyloglucan. The sequence is that of Probable glycosyltransferase 6 from Oryza sativa subsp. japonica (Rice).